The following is a 467-amino-acid chain: MASLLQSERVLYLVQGEKKVRAPLSQLYFCRYCSELRSLECVSHEVDSHYCPSCLENMPSAEAKLKKNRCANCFDCPGCMHTLSTRATSISTQLPDDPAKTAVKKAYYLACGFCRWTSRDVGMADKSVASGGWQEPDHPHTQRMNKLIEYYQQLAQKEKVERDRKKLARRRNYMPLAFSQHTIHVVDKYGLGTRLQRPRAGTTITALAGLSLKEGEDQKEIKIEPAQAVDEVEPLPEDYYTRPVNLTEVTTLQQRLLQPDFQPICASQLYPRHKHLLIKRSLRCRQCEHNLSKPEFNPTSIKFKIQLVAVNYIPEVRIMSIPNLRYMKESQVLLTLTNPVENLTHVTLLECEEGDPDDTNSTAKVSVPPTELVLAGKDAAAEYDELAEPQDFPDDPDVVAFRKANKVGVFIKVTPQREEGDVTVCFKLKHDFKNLAAPIRPVEEADPGAEVSWLTQHVELSLGPLLP.

An N-acetylalanine modification is found at A2. Residue K222 forms a Glycyl lysine isopeptide (Lys-Gly) (interchain with G-Cter in SUMO2) linkage. Residue T414 is modified to Phosphothreonine.

This sequence belongs to the dynactin subunit 4 family. In terms of assembly, subunit of dynactin, a multiprotein complex part of a tripartite complex with dynein and a adapter, such as BICDL1, BICD2 or HOOK3. The dynactin complex is built around ACTR1A/ACTB filament and consists of an actin-related filament composed of a shoulder domain, a pointed end and a barbed end. Its length is defined by its flexible shoulder domain. The soulder is composed of 2 DCTN1 subunits, 4 DCTN2 and 2 DCTN3. The 4 DCNT2 (via N-terminus) bind the ACTR1A filament and act as molecular rulers to determine the length. The pointed end is important for binding dynein-dynactin cargo adapters. Consists of 4 subunits: ACTR10, DCNT4, DCTN5 and DCTN6. The barbed end is composed of a CAPZA1:CAPZB heterodimers, which binds ACTR1A/ACTB filament and dynactin and stabilizes dynactin. Interacts with ATP7B, but not ATP7A, in a copper-dependent manner. Interacts with ANK2; this interaction is required for localization at costameres. Interacts with N4BP2L1.

The protein resides in the cytoplasm. It localises to the cytoskeleton. It is found in the microtubule organizing center. Its subcellular location is the centrosome. The protein localises to the stress fiber. The protein resides in the cell cortex. It localises to the myofibril. It is found in the sarcomere. Part of the dynactin complex that activates the molecular motor dynein for ultra-processive transport along microtubules. Together with dynein is involved in spindle assembly and cytokinesis. The sequence is that of Dynactin subunit 4 (DCTN4) from Sus scrofa (Pig).